Reading from the N-terminus, the 183-residue chain is MIKLFSLKQQKKEEESAGGTKGSSKKASAAQLRIQKDINELNLPKTCEIEFSDHDDLLNFKLVICPDEGFYKGGKFVFSFKVGQGYPHDPPKVKCETMVYHPNIDLEGNVCLNILREDWKPVLTINSIIYGLQYLFLEPNPEDPLNKEAAEVLQNNRRLFEQNVQRSMRGGYIGSTYFERCLK.

Met1 bears the N-acetylmethionine mark. The tract at residues 1 to 28 is disordered; it reads MIKLFSLKQQKKEEESAGGTKGSSKKAS. In terms of domain architecture, UBC core spans 29–173; sequence AAQLRIQKDI…VQRSMRGGYI (145 aa). Residue Cys111 is the Glycyl thioester intermediate of the active site.

Belongs to the ubiquitin-conjugating enzyme family. UBC12 subfamily. Post-translationally, the acetylation of Met-1 increases affinity for DCUN1D1 by about 2 orders of magnitude and is crucial for NEDD8 transfer to cullins.

The enzyme catalyses [E1 NEDD8-activating enzyme]-S-[NEDD8 protein]-yl-L-cysteine + [E2 NEDD8-conjugating enzyme]-L-cysteine = [E1 NEDD8-activating enzyme]-L-cysteine + [E2 NEDD8-conjugating enzyme]-S-[NEDD8-protein]-yl-L-cysteine.. The protein operates within protein modification; protein neddylation. In terms of biological role, accepts the ubiquitin-like protein NEDD8 from the UBA3-NAE1 E1 complex and catalyzes its covalent attachment to other proteins. The specific interaction with the E3 ubiquitin ligase rbx1, but not rbx2, suggests that the rbx1-ube2m complex neddylates specific target proteins, such as cul1, cul2, cul3 and cul4. Involved in cell proliferation. The polypeptide is NEDD8-conjugating enzyme Ubc12 (ube2m) (Xenopus tropicalis (Western clawed frog)).